The following is a 443-amino-acid chain: Threonine/serine transporter TdcC (443 aa).

11 helical membrane passes run 24 to 44 (WVLGLFGTAIGAGVLFFPISA), 45 to 65 (GIGGLLPIIFMLILAFPIAFF), 95 to 115 (VGGVVITFLYFFAICPLLWIY), 140 to 160 (VVALAILLVMAFFIYFGKDLM), 163 to 183 (VMGYLVFPFITCLVLISLSLI), 207 to 227 (ILVTVWLGIAIMVFSFNFSPI), 259 to 279 (ASVLMVVVVMFFAFSCLFTLS), 319 to 339 (ASIIALVAIFKSFFGHYLGTL), 363 to 383 (LNMISMVIIMGSTWVIAYINP), 385 to 405 (ILDLIGAMGAPIIAALLCLLP), and 423 to 443 (SNYFVTIIGLLTILNIVYQLM).

It belongs to the amino acid/polyamine transporter 2 family. SdaC/TdcC subfamily.

Its subcellular location is the cell inner membrane. The catalysed reaction is L-threonine(in) + H(+)(in) = L-threonine(out) + H(+)(out). The enzyme catalyses L-serine(in) + H(+)(in) = L-serine(out) + H(+)(out). Functionally, involved in the import of threonine and serine into the cell, with the concomitant import of a proton (symport system). The polypeptide is Threonine/serine transporter TdcC (Edwardsiella piscicida).